The following is a 176-amino-acid chain: Peptide deformylase (176 aa).

2 residues coordinate Fe cation: Cys92 and His134. Glu135 is an active-site residue. A Fe cation-binding site is contributed by His138.

This sequence belongs to the polypeptide deformylase family. Fe(2+) is required as a cofactor.

The enzyme catalyses N-terminal N-formyl-L-methionyl-[peptide] + H2O = N-terminal L-methionyl-[peptide] + formate. Functionally, removes the formyl group from the N-terminal Met of newly synthesized proteins. Requires at least a dipeptide for an efficient rate of reaction. N-terminal L-methionine is a prerequisite for activity but the enzyme has broad specificity at other positions. This is Peptide deformylase from Acinetobacter baumannii (strain SDF).